The primary structure comprises 418 residues: MAGRLPACVVDCGTGYTKLGYAGNTEPQFIMPSCIAIKESSKVGDQAQRRMMRGVDDLDFFIGDEAIDKPPYATKWPIRHGIVEDWDLMERFMEQIIFKYLRAEPEDHYFLLTEPPLNTPENREYTAEIMFESFNVPGLYIAVQAVLALAASWTSRQVGERTLTGTVIDSGDGVTHVIPVAEGYVIGSCIKHIPIAGRDITYFTQQLLREREVGIPPEQSLETAKAVKERFSYVCPDLVKEFNKYDTDGSKWIKQYTGINAITKKEFTIDVGYERFLGPEIFFHPEFANPDFTQPISEVVDEVIQNCPIDVRRPLYKNIVLSGGSTMFRDFGRRLQRDLKRTVDARLKMSEELSGGKLKPKPIDVQVITHHMQRYAVWFGGSMLASTPEFYQVCHTKKDYEEIGPSICRHNPVFGVMS.

It belongs to the actin family. ARP3 subfamily. In terms of assembly, component of the Arp2/3 complex composed of actr2/arp2, actr3/arp3, arpc1b, arpc2, arpc3, arpc4 and arpc5.

It is found in the cytoplasm. The protein localises to the cytoskeleton. Its subcellular location is the cell projection. The protein resides in the nucleus. In terms of biological role, ATP-binding component of the Arp2/3 complex, a multiprotein complex that mediates actin polymerization upon stimulation by nucleation-promoting factor (NPF). The Arp2/3 complex mediates the formation of branched actin networks in the cytoplasm, providing the force for cell motility. Seems to contact the pointed end of the daughter actin filament. In addition to its role in the cytoplasmic cytoskeleton, the Arp2/3 complex also promotes actin polymerization in the nucleus, thereby regulating gene transcription and repair of damaged DNA. The Arp2/3 complex promotes homologous recombination (HR) repair in response to DNA damage by promoting nuclear actin polymerization, leading to drive motility of double-strand breaks (DSBs). In Takifugu rubripes (Japanese pufferfish), this protein is Actin-related protein 3 (actr3).